Here is a 435-residue protein sequence, read N- to C-terminus: Keratin, type I cytoskeletal 18 (435 aa).

Residues 2–84 (SYRPGSYSVS…SVSGSGLVGN (83 aa)) are head. Positions 85–120 (EKETMIGLNDRLAAYLETVRNLEQANSKLEFQIREA) are coil 1A. In terms of domain architecture, IF rod spans 85 to 396 (EKETMIGLND…RLLDGEDFRL (312 aa)). Positions 121 to 137 (LEKKGPTTRDLSPFEKT) are linker 1. A coil 1B region spans residues 138 to 229 (LEDLRKKVYD…QNHNQEVNDL (92 aa)). Residues 230 to 253 (RNQIAQSGVQVDVDAPKGQDLAQV) are linker 12. Residues 254–391 (LAEVRAQYES…IATYRRLLDG (138 aa)) form a coil 2 region. The segment at 392-435 (EDFRLQDALVDQSSTKSIKKVTVTQTLVDGKVVSESTNTKEIGK) is tail.

This sequence belongs to the intermediate filament family. In terms of assembly, heterotetramer of two type I and two type II keratins. Keratin-18 associates with keratin-8. Phosphorylated. In terms of processing, proteolytically cleaved by caspases during epithelial cell apoptosis.

When phosphorylated, plays a role in filament reorganization. The polypeptide is Keratin, type I cytoskeletal 18 (Acipenser baerii (Siberian sturgeon)).